The chain runs to 145 residues: Large ribosomal subunit protein uL13 (145 aa).

The protein belongs to the universal ribosomal protein uL13 family. Part of the 50S ribosomal subunit.

In terms of biological role, this protein is one of the early assembly proteins of the 50S ribosomal subunit, although it is not seen to bind rRNA by itself. It is important during the early stages of 50S assembly. The chain is Large ribosomal subunit protein uL13 from Staphylococcus epidermidis (strain ATCC 35984 / DSM 28319 / BCRC 17069 / CCUG 31568 / BM 3577 / RP62A).